Reading from the N-terminus, the 237-residue chain is Purine nucleoside phosphorylase DeoD-type (237 aa).

His-5 contacts a purine D-ribonucleoside. Phosphate is bound by residues Gly-21, Arg-25, Arg-44, and 88–91; that span reads RVGS. Residues 180-182 and 204-205 each bind a purine D-ribonucleoside; these read EME and SD. Catalysis depends on Asp-205, which acts as the Proton donor.

Belongs to the PNP/UDP phosphorylase family. As to quaternary structure, homohexamer; trimer of homodimers.

It carries out the reaction a purine D-ribonucleoside + phosphate = a purine nucleobase + alpha-D-ribose 1-phosphate. It catalyses the reaction a purine 2'-deoxy-D-ribonucleoside + phosphate = a purine nucleobase + 2-deoxy-alpha-D-ribose 1-phosphate. Catalyzes the reversible phosphorolytic breakdown of the N-glycosidic bond in the beta-(deoxy)ribonucleoside molecules, with the formation of the corresponding free purine bases and pentose-1-phosphate. In Edwardsiella ictaluri (strain 93-146), this protein is Purine nucleoside phosphorylase DeoD-type.